A 295-amino-acid chain; its full sequence is Ribosomal protein L11 methyltransferase (295 aa).

Positions 146, 167, 189, and 231 each coordinate S-adenosyl-L-methionine.

Belongs to the methyltransferase superfamily. PrmA family.

The protein resides in the cytoplasm. The enzyme catalyses L-lysyl-[protein] + 3 S-adenosyl-L-methionine = N(6),N(6),N(6)-trimethyl-L-lysyl-[protein] + 3 S-adenosyl-L-homocysteine + 3 H(+). Its function is as follows. Methylates ribosomal protein L11. The protein is Ribosomal protein L11 methyltransferase of Vibrio vulnificus (strain YJ016).